The chain runs to 187 residues: UPF0301 protein YqgE (187 aa).

The protein belongs to the UPF0301 (AlgH) family.

The protein is UPF0301 protein YqgE of Salmonella agona (strain SL483).